We begin with the raw amino-acid sequence, 568 residues long: Proline--tRNA ligase (568 aa).

The protein belongs to the class-II aminoacyl-tRNA synthetase family. ProS type 1 subfamily. In terms of assembly, homodimer.

It is found in the cytoplasm. The catalysed reaction is tRNA(Pro) + L-proline + ATP = L-prolyl-tRNA(Pro) + AMP + diphosphate. Its function is as follows. Catalyzes the attachment of proline to tRNA(Pro) in a two-step reaction: proline is first activated by ATP to form Pro-AMP and then transferred to the acceptor end of tRNA(Pro). As ProRS can inadvertently accommodate and process non-cognate amino acids such as alanine and cysteine, to avoid such errors it has two additional distinct editing activities against alanine. One activity is designated as 'pretransfer' editing and involves the tRNA(Pro)-independent hydrolysis of activated Ala-AMP. The other activity is designated 'posttransfer' editing and involves deacylation of mischarged Ala-tRNA(Pro). The misacylated Cys-tRNA(Pro) is not edited by ProRS. The polypeptide is Proline--tRNA ligase (Campylobacter jejuni subsp. jejuni serotype O:6 (strain 81116 / NCTC 11828)).